The sequence spans 596 residues: Fructan 1-exohydrolase w2 (596 aa).

Residues 1 to 20 form the signal peptide; sequence MAQAWAFLLPVLVLGSYVTS. Residue aspartate 75 is part of the active site. N-linked (GlcNAc...) asparagine glycans are attached at residues asparagine 168, asparagine 236, and asparagine 248. A disulfide bridge links cysteine 446 with cysteine 492. An N-linked (GlcNAc...) asparagine glycan is attached at asparagine 567.

It belongs to the glycosyl hydrolase 32 family.

The enzyme catalyses Hydrolysis of terminal, non-reducing (2-&gt;1)-linked beta-D-fructofuranose residues in fructans.. Its activity is regulated as follows. Inhibited by sucrose. Functionally, hydrolyzes inulin-type beta-(2,1)-fructans, but not beta-(2,1)-linkages in branched fructans. Has low activity against beta-(2,6)-linked fructans. May play a role as a beta-(2,1)-trimmer during graminan biosynthesis. In Triticum aestivum (Wheat), this protein is Fructan 1-exohydrolase w2.